We begin with the raw amino-acid sequence, 263 residues long: Eukaryotic translation initiation factor 3 subunit J-B (263 aa).

Low complexity predominate over residues 1-13 (MAAAAAAAAAAAA). Residues 1-115 (MAAAAAAAAA…EPEESKVLTP (115 aa)) form a disordered region. Ala2 bears the N-acetylalanine mark. The tract at residues 6–74 (AAAAAAAAGD…KEEAEVKPEV (69 aa)) is sufficient for interaction with EIF3B. 3 positions are modified to phosphoserine: Ser16, Ser18, and Ser25. Positions 45 to 66 (EGEDEDEDVKDNWDDDDDENKE) are enriched in acidic residues. Positions 67 to 111 (EAEVKPEVKISEKKKIAEKIKEKERQQKKRQEEIKKRLEEPEESK) are enriched in basic and acidic residues. Residues 75 to 140 (KISEKKKIAE…ESDLELAKET (66 aa)) are a coiled coil. Lys111 is covalently cross-linked (Glycyl lysine isopeptide (Lys-Gly) (interchain with G-Cter in SUMO2)). A Phosphothreonine modification is found at Thr114. Phosphoserine is present on Ser132. Positions 248–263 (YGGYEGGYVQDYEDFM) are promotes stable association with the 40S ribosome. Tyr259 is modified (phosphotyrosine).

This sequence belongs to the eIF-3 subunit J family. In terms of assembly, component of the eukaryotic translation initiation factor 3 (eIF-3) complex, which is composed of 13 subunits: EIF3A, EIF3B, EIF3C, EIF3D, EIF3E, EIF3F, EIF3G, EIF3H, EIF3I, EIF3J, EIF3K, EIF3L and EIF3M. The eIF-3 complex appears to include 3 stable modules: module A is composed of EIF3A, EIF3B, EIF3G and EIF3I; module B is composed of EIF3F, EIF3H, and EIF3M; and module C is composed of EIF3C, EIF3D, EIF3E, EIF3K and EIF3L. EIF3C of module C binds EIF3B of module A and EIF3H of module B, thereby linking the three modules. EIF3J is a labile subunit that binds to the eIF-3 complex via EIF3B. The eIF-3 complex interacts with RPS6KB1 under conditions of nutrient depletion. Mitogenic stimulation leads to binding and activation of a complex composed of MTOR and RPTOR, leading to phosphorylation and release of RPS6KB1 and binding of EIF4B to eIF-3. In terms of processing, phosphorylated. Phosphorylation is enhanced upon serum stimulation.

Its subcellular location is the cytoplasm. Functionally, component of the eukaryotic translation initiation factor 3 (eIF-3) complex, which is required for several steps in the initiation of protein synthesis. The eIF-3 complex associates with the 40S ribosome and facilitates the recruitment of eIF-1, eIF-1A, eIF-2:GTP:methionyl-tRNAi and eIF-5 to form the 43S pre-initiation complex (43S PIC). The eIF-3 complex stimulates mRNA recruitment to the 43S PIC and scanning of the mRNA for AUG recognition. The eIF-3 complex is also required for disassembly and recycling of post-termination ribosomal complexes and subsequently prevents premature joining of the 40S and 60S ribosomal subunits prior to initiation. The eIF-3 complex specifically targets and initiates translation of a subset of mRNAs involved in cell proliferation, including cell cycling, differentiation and apoptosis, and uses different modes of RNA stem-loop binding to exert either translational activation or repression. This subunit binds directly within the mRNA entry channel of the 40S ribosome to the aminoacyl (A) site. It may regulate the interaction between the 43S PIC and mRNA. The chain is Eukaryotic translation initiation factor 3 subunit J-B (Eif3j2) from Mus musculus (Mouse).